The primary structure comprises 299 residues: Circadian clock oscillator protein KaiA (299 aa).

A psR domain, binds oxidized quinones region spans residues 9 to 148 (SRPQIFICTL…LQLSKACRLP (140 aa)). The region spanning 9-179 (SRPQIFICTL…RLSQKLKERL (171 aa)) is the KaiA N-terminal domain. A flexible linker region spans residues 180–188 (GYLGVYYKR). One can recognise a KaiA C-terminal domain in the interval 189–297 (NPQQFFHKLT…CEMYRRSIPK (109 aa)).

Homodimer. The KaiABC complex composition changes during the circadian cycle to control KaiC phosphorylation. Complexes KaiC(6), KaiA(2-4):KaiC(6), KaiB(6):KaiC(6) and KaiC(6):KaiB(6):KaiA(12) are among the most important forms, many form cooperatively. KaiA and CikA bind to the same region of the KaiB(fs) form and therefore compete.

In terms of biological role, key component of the KaiABC oscillator complex, which constitutes the main circadian regulator in cyanobacteria. Complex composition changes during the circadian cycle to control KaiC phosphorylation. KaiA stimulates KaiC autophosphorylation, while KaiB sequesters KaiA, leading to KaiC autodephosphorylation. KaiA binding to the KaiC CII domain during the subjective day yields KaiA(2-4):KaiC(6) complexes which stimulate KaiC autophosphorylation. Phospho-Ser-431 KaiC accumulation triggers binding of KaiB during the subjective night to form the KaiB(6):KaiC(6) complex, leading to changes in the output regulators CikA and SasA. KaiB(6):KaiC(6) formation exposes a site for KaiA binding on KaiB that sequesters KaiA from KaiC's CII domain, making the KaiC(6):KaiB(6):KaiA(12) complex resulting in KaiC autodephosphorylation. Complete dephosphorylation of KaiC leads to dissociation of KaiA(2):KaiB(1), completing 1 cycle of the Kai oscillator. Its function is as follows. Binds oxidized quinones via the N-terminal PsR domain, allowing it to sense redox changes and possibly mediate clock input. This Acaryochloris marina (strain MBIC 11017) protein is Circadian clock oscillator protein KaiA.